The primary structure comprises 348 residues: Beta-hexosaminidase (348 aa).

Substrate contacts are provided by residues D64, R72, R138, and 168–169; that span reads KH. H181 acts as the Proton donor/acceptor in catalysis. The active-site Nucleophile is the D252.

The protein belongs to the glycosyl hydrolase 3 family. NagZ subfamily.

It is found in the cytoplasm. The catalysed reaction is Hydrolysis of terminal non-reducing N-acetyl-D-hexosamine residues in N-acetyl-beta-D-hexosaminides.. It functions in the pathway cell wall biogenesis; peptidoglycan recycling. Functionally, plays a role in peptidoglycan recycling by cleaving the terminal beta-1,4-linked N-acetylglucosamine (GlcNAc) from peptide-linked peptidoglycan fragments, giving rise to free GlcNAc, anhydro-N-acetylmuramic acid and anhydro-N-acetylmuramic acid-linked peptides. This Alkalilimnicola ehrlichii (strain ATCC BAA-1101 / DSM 17681 / MLHE-1) protein is Beta-hexosaminidase.